Reading from the N-terminus, the 819-residue chain is Advillin (819 aa).

Positions 1-731 (MSLSSAFRAV…YEQLKNELGD (731 aa)) are core. The Gelsolin-like 1 repeat unit spans residues 24-73 (MELALVPLSAHGNFYEGDCYIVLSTRRVGSLLSQNIHFWIGKDSSQDEQS). Tyr85 is subject to Phosphotyrosine. A 1,2-diacyl-sn-glycero-3-phospho-(1D-myo-inositol-4,5-bisphosphate)-binding positions include 109–116 (KQGIIYKK) and 135–143 (RLLHVKGKR). 5 Gelsolin-like repeats span residues 145-185 (IQAT…GERL), 262-306 (LSVT…VEKQ), 403-454 (ENLE…DELA), 525-565 (TKAV…DERA), and 628-669 (FLVT…TEKK). Positions 628–819 (FLVTEVTDFT…LQLKKERGLF (192 aa)) are required for interaction with F-actin. Residues 732–819 (ATAIVRITAD…LQLKKERGLF (88 aa)) are headpiece. Phosphotyrosine is present on residues Tyr748 and Tyr758. An HP domain is found at 753–819 (DGEPKYYPVE…LQLKKERGLF (67 aa)).

It belongs to the villin/gelsolin family. Associates (via C-terminus) with actin. Interacts with F-actin. Interacts with SCARF1; the interaction occurs in embryonic dorsal root ganglions at 18 dpc and induces neurite-like outgrowth. Interacts with PLCE1. Interacts with ACTR2 and ACTR3; associates with the ARP2/3 complex. Most highly expressed in the endometrium of the uterus, the intestinal villi and the testes. Weaker expression also detected in the brain, dorsal root ganglions and on the surface of the tongue.

Its subcellular location is the cytoplasm. The protein localises to the cytoskeleton. The protein resides in the cell projection. It localises to the lamellipodium. It is found in the cell junction. Its subcellular location is the focal adhesion. The protein localises to the neuron projection. The protein resides in the axon. In terms of biological role, ca(2+)-regulated actin-binding protein which plays an important role in actin bundling. May have a unique function in the morphogenesis of neuronal cells which form ganglia. Required for SREC1-mediated regulation of neurite-like outgrowth. Plays a role in regenerative sensory axon outgrowth and remodeling processes after peripheral injury in neonates. Involved in the formation of long fine actin-containing filopodia-like structures in fibroblast. Plays a role in ciliogenesis. In podocytes, controls lamellipodia formation through the regulation of EGF-induced diacylglycerol generation by PLCE1 and ARP2/3 complex assembly. The chain is Advillin from Mus musculus (Mouse).